The chain runs to 130 residues: Histone H2A type 1-D (130 aa).

Residues 1 to 22 (MSGRGKQGGKARAKAKTRSSRA) are disordered. Serine 2 carries the N-acetylserine modification. Serine 2 is subject to Phosphoserine; by RPS6KA5. The residue at position 4 (arginine 4) is a Citrulline; alternate. The residue at position 4 (arginine 4) is a Symmetric dimethylarginine; by PRMT5; alternate. Lysine 6 and lysine 10 each carry N6-(2-hydroxyisobutyryl)lysine; alternate. N6-acetyllysine; alternate is present on lysine 6. The segment covering 7-19 (QGGKARAKAKTRS) has biased composition (basic residues). N6-(beta-hydroxybutyryl)lysine; alternate occurs at positions 10 and 14. The residue at position 10 (lysine 10) is an N6-lactoyllysine; alternate. The residue at position 10 (lysine 10) is an N6-succinyllysine; alternate. A Glycyl lysine isopeptide (Lys-Gly) (interchain with G-Cter in ubiquitin); alternate cross-link involves residue lysine 14. A Glycyl lysine isopeptide (Lys-Gly) (interchain with G-Cter in ubiquitin) cross-link involves residue lysine 16. At lysine 37 the chain carries N6-(2-hydroxyisobutyryl)lysine; alternate. Residue lysine 37 is modified to N6-(beta-hydroxybutyryl)lysine; alternate. Lysine 37 bears the N6-crotonyllysine; alternate mark. N6-(2-hydroxyisobutyryl)lysine is present on residues lysine 75 and lysine 76. An N6-(2-hydroxyisobutyryl)lysine; alternate modification is found at lysine 96. Lysine 96 carries the post-translational modification N6-(beta-hydroxybutyryl)lysine; alternate. Lysine 96 carries the post-translational modification N6-succinyllysine; alternate. Lysine 96 is subject to N6-glutaryllysine; alternate. An N6-glutaryllysine modification is found at lysine 100. Position 105 is an N5-methylglutamine (glutamine 105). N6-(2-hydroxyisobutyryl)lysine; alternate is present on lysine 119. Residue lysine 119 is modified to N6-(beta-hydroxybutyryl)lysine; alternate. N6-crotonyllysine; alternate occurs at positions 119 and 120. An N6-glutaryllysine; alternate mark is found at lysine 119 and lysine 120. Lysine 120 is covalently cross-linked (Glycyl lysine isopeptide (Lys-Gly) (interchain with G-Cter in ubiquitin); alternate). Threonine 121 is subject to Phosphothreonine; by DCAF1. N6-crotonyllysine; alternate is present on lysine 126. Residue lysine 126 is modified to N6-glutaryllysine; alternate.

It belongs to the histone H2A family. As to quaternary structure, the nucleosome is a histone octamer containing two molecules each of H2A, H2B, H3 and H4 assembled in one H3-H4 heterotetramer and two H2A-H2B heterodimers. The octamer wraps approximately 147 bp of DNA. Post-translationally, deiminated on Arg-4 in granulocytes upon calcium entry. In terms of processing, monoubiquitination of Lys-120 (H2AK119Ub) by RING1, TRIM37 and RNF2/RING2 complex gives a specific tag for epigenetic transcriptional repression and participates in X chromosome inactivation of female mammals. It is involved in the initiation of both imprinted and random X inactivation. Ubiquitinated H2A is enriched in inactive X chromosome chromatin. Ubiquitination of H2A functions downstream of methylation of 'Lys-27' of histone H3 (H3K27me). H2AK119Ub by RNF2/RING2 can also be induced by ultraviolet and may be involved in DNA repair. Monoubiquitination of Lys-120 (H2AK119Ub) by TRIM37 may promote transformation of cells in a number of breast cancers. Following DNA double-strand breaks (DSBs), it is ubiquitinated through 'Lys-63' linkage of ubiquitin moieties by the E2 ligase UBE2N and the E3 ligases RNF8 and RNF168, leading to the recruitment of repair proteins to sites of DNA damage. Ubiquitination at Lys-14 and Lys-16 (H2AK13Ub and H2AK15Ub, respectively) in response to DNA damage is initiated by RNF168 that mediates monoubiquitination at these 2 sites, and 'Lys-63'-linked ubiquitin are then conjugated to monoubiquitin; RNF8 is able to extend 'Lys-63'-linked ubiquitin chains in vitro. Deubiquitinated by USP51 at Lys-14 and Lys-16 (H2AK13Ub and H2AK15Ub, respectively) after damaged DNA is repaired. H2AK119Ub and ionizing radiation-induced 'Lys-63'-linked ubiquitination (H2AK13Ub and H2AK15Ub) are distinct events. Phosphorylation on Ser-2 (H2AS1ph) is enhanced during mitosis. Phosphorylation on Ser-2 by RPS6KA5/MSK1 directly represses transcription. Acetylation of H3 inhibits Ser-2 phosphorylation by RPS6KA5/MSK1. Phosphorylation at Thr-121 (H2AT120ph) by DCAF1 is present in the regulatory region of many tumor suppresor genes and down-regulates their transcription. Post-translationally, glutamine methylation at Gln-105 (H2AQ104me) by FBL is specifically dedicated to polymerase I. It is present at 35S ribosomal DNA locus and impairs binding of the FACT complex. In terms of processing, symmetric dimethylation on Arg-4 by the PRDM1/PRMT5 complex may play a crucial role in the germ-cell lineage. Crotonylation (Kcr) is specifically present in male germ cells and marks testis-specific genes in post-meiotic cells, including X-linked genes that escape sex chromosome inactivation in haploid cells. Crotonylation marks active promoters and enhancers and confers resistance to transcriptional repressors. It is also associated with post-meiotically activated genes on autosomes. Post-translationally, lactylated in macrophages by EP300/P300 by using lactoyl-CoA directly derived from endogenous or exogenous lactate, leading to stimulates gene transcription.

Its subcellular location is the nucleus. The protein resides in the chromosome. Core component of nucleosome. Nucleosomes wrap and compact DNA into chromatin, limiting DNA accessibility to the cellular machineries which require DNA as a template. Histones thereby play a central role in transcription regulation, DNA repair, DNA replication and chromosomal stability. DNA accessibility is regulated via a complex set of post-translational modifications of histones, also called histone code, and nucleosome remodeling. This Homo sapiens (Human) protein is Histone H2A type 1-D.